A 127-amino-acid chain; its full sequence is Fluoride-specific ion channel FluC (127 aa).

A run of 4 helical transmembrane segments spans residues 4 to 24 (IMLA…WLGL), 35 to 55 (VGTL…LAWF), 71 to 91 (TGLC…VFLL), and 101 to 121 (LNVA…FWLF). Positions 75 and 78 each coordinate Na(+).

The protein belongs to the fluoride channel Fluc/FEX (TC 1.A.43) family.

The protein localises to the cell inner membrane. The catalysed reaction is fluoride(in) = fluoride(out). Its activity is regulated as follows. Na(+) is not transported, but it plays an essential structural role and its presence is essential for fluoride channel function. Functionally, fluoride-specific ion channel. Important for reducing fluoride concentration in the cell, thus reducing its toxicity. This is Fluoride-specific ion channel FluC from Cronobacter sakazakii (strain ATCC BAA-894) (Enterobacter sakazakii).